The sequence spans 219 residues: Small ribosomal subunit protein uS4 (219 aa).

One can recognise an S4 RNA-binding domain in the interval 112–174; that stretch reads RRLQTQVLRL…GSSPLMSESH (63 aa). Positions 193–219 are disordered; it reads KAAAEAKQARERPPERGGGRKKRGGRR. Positions 199 to 210 are enriched in basic and acidic residues; sequence KQARERPPERGG.

It belongs to the universal ribosomal protein uS4 family. As to quaternary structure, part of the 30S ribosomal subunit. Contacts protein S5. The interaction surface between S4 and S5 is involved in control of translational fidelity.

One of the primary rRNA binding proteins, it binds directly to 16S rRNA where it nucleates assembly of the body of the 30S subunit. In terms of biological role, with S5 and S12 plays an important role in translational accuracy. The chain is Small ribosomal subunit protein uS4 from Methanosarcina mazei (strain ATCC BAA-159 / DSM 3647 / Goe1 / Go1 / JCM 11833 / OCM 88) (Methanosarcina frisia).